A 486-amino-acid chain; its full sequence is Cardiolipin synthase A (486 aa).

The next 2 helical transmembrane spans lie at 3-23 (TFYTVVSWLVILGYWILIAGV) and 38-58 (MAWLLIIYILPLVGIIAYLSF). PLD phosphodiesterase domains follow at residues 219 to 246 (MDLRQHRKMVMIDNYIAYTGSMNMVDPR) and 399 to 426 (EGGLLHTKSVLVDGELSLVGTVNLDMRS). Catalysis depends on residues His224, Lys226, Asp231, His404, Lys406, and Asp411.

It belongs to the phospholipase D family. Cardiolipin synthase subfamily. ClsA sub-subfamily.

It localises to the cell inner membrane. The enzyme catalyses 2 a 1,2-diacyl-sn-glycero-3-phospho-(1'-sn-glycerol) = a cardiolipin + glycerol. Catalyzes the reversible phosphatidyl group transfer from one phosphatidylglycerol molecule to another to form cardiolipin (CL) (diphosphatidylglycerol) and glycerol. This chain is Cardiolipin synthase A, found in Citrobacter koseri (strain ATCC BAA-895 / CDC 4225-83 / SGSC4696).